Reading from the N-terminus, the 526-residue chain is Cytochrome P450 4F5 (526 aa).

C470 contributes to the heme binding site.

It belongs to the cytochrome P450 family. It depends on heme as a cofactor. In terms of tissue distribution, high expression in liver and kidney. Lower expression in brain.

It is found in the endoplasmic reticulum membrane. The protein localises to the microsome membrane. The enzyme catalyses an organic molecule + reduced [NADPH--hemoprotein reductase] + O2 = an alcohol + oxidized [NADPH--hemoprotein reductase] + H2O + H(+). The protein is Cytochrome P450 4F5 (Cyp4f5) of Rattus norvegicus (Rat).